A 48-amino-acid chain; its full sequence is Photosystem II reaction center protein K (48 aa).

The propeptide occupies 1 to 11 (MFPSTNQEVLA). The helical transmembrane segment at 23–43 (IVDVLPIIPLLFLLLAFVWQA) threads the bilayer.

It belongs to the PsbK family. As to quaternary structure, PSII is composed of 1 copy each of membrane proteins PsbA, PsbB, PsbC, PsbD, PsbE, PsbF, PsbH, PsbI, PsbJ, PsbK, PsbL, PsbM, PsbT, PsbY, PsbZ, Psb30/Ycf12, at least 3 peripheral proteins of the oxygen-evolving complex and a large number of cofactors. It forms dimeric complexes.

The protein localises to the plastid. Its subcellular location is the chloroplast thylakoid membrane. Its function is as follows. One of the components of the core complex of photosystem II (PSII). PSII is a light-driven water:plastoquinone oxidoreductase that uses light energy to abstract electrons from H(2)O, generating O(2) and a proton gradient subsequently used for ATP formation. It consists of a core antenna complex that captures photons, and an electron transfer chain that converts photonic excitation into a charge separation. The chain is Photosystem II reaction center protein K from Euglena sanguinea.